The sequence spans 1231 residues: Protein FAM193A (1231 aa).

Positions Cys-106–Tyr-142 form a coiled coil. Residues Asp-249–Ile-272 are disordered. Positions Ser-258–Ser-270 are enriched in low complexity. Ser-293 is modified (phosphoserine). 5 disordered regions span residues Asn-331–Gln-405, Gln-633–Phe-703, Ser-719–Glu-789, Leu-826–Gly-845, and Asn-860–Asp-1174. A compositionally biased stretch (acidic residues) spans Glu-355–Ser-365. Ser-648 is subject to Phosphoserine. Over residues Leu-676–Ser-691 the composition is skewed to low complexity. Over residues Gln-761–Ser-773 the composition is skewed to acidic residues. Over residues Glu-776–Thr-785 the composition is skewed to low complexity. Positions Ala-872 to Arg-881 are enriched in basic residues. A coiled-coil region spans residues Arg-877 to Asn-973. The segment covering Lys-882–Glu-909 has biased composition (basic and acidic residues). Over residues Glu-910 to Glu-920 the composition is skewed to acidic residues. Basic and acidic residues predominate over residues Gln-921–Lys-935. Residues Arg-937–Arg-946 show a composition bias toward basic residues. Polar residues predominate over residues Gln-962–Leu-979. Phosphoserine occurs at positions 1136 and 1151. Residues Gly-1156–Gly-1166 show a composition bias toward basic residues.

This sequence belongs to the FAM193 family.

In Mus musculus (Mouse), this protein is Protein FAM193A (Fam193a).